The primary structure comprises 452 residues: Elongation factor Tu, mitochondrial (452 aa).

The transit peptide at 1–43 (MAAATLLRATPRFSGLCASPTPFLQGRLRPLKAPASPFLCRGL) directs the protein to the mitochondrion. A tr-type G domain is found at 55 to 251 (KPHVNVGTIG…AVDTYIPVPT (197 aa)). Positions 64–71 (GHVDHGKT) are G1. GTP contacts are provided by D67, G69, K70, T71, and T72. Mg(2+) is bound at residue T71. An N6-acetyllysine modification is found at K79. K88 carries the N6-acetyllysine; alternate modification. Residue K88 is modified to N6-succinyllysine; alternate. The interval 105–109 (GITIN) is G2. Residues 126–129 (DCPG) form a G3 region. Residues N181, D184, S219, A220, and L221 each contribute to the GTP site. The G4 stretch occupies residues 181–184 (NKAD). The segment at 219–221 (SAL) is G5. The residue at position 234 (K234) is an N6-succinyllysine. K256 carries the post-translational modification N6-acetyllysine. A Phosphothreonine modification is found at T278. K286 bears the N6-succinyllysine mark. S312 is modified (phosphoserine). K361 and K418 each carry N6-acetyllysine.

Belongs to the TRAFAC class translation factor GTPase superfamily. Classic translation factor GTPase family. EF-Tu/EF-1A subfamily. As to quaternary structure, interacts with NLRX1. Interacts with ATG16L1.

The protein resides in the mitochondrion. The enzyme catalyses GTP + H2O = GDP + phosphate + H(+). Its function is as follows. GTP hydrolase that promotes the GTP-dependent binding of aminoacyl-tRNA to the A-site of ribosomes during protein biosynthesis. Also plays a role in the regulation of autophagy and innate immunity. Recruits ATG5-ATG12 and NLRX1 at mitochondria and serves as a checkpoint of the RIGI-MAVS pathway. In turn, inhibits RLR-mediated type I interferon while promoting autophagy. In Mus musculus (Mouse), this protein is Elongation factor Tu, mitochondrial (Tufm).